We begin with the raw amino-acid sequence, 147 residues long: MPLTADQVAALKASWPEVSAGDGGGQLGLELFTKYFHENPQMMFIFGYSGRTDALKHNAKLQNHGKVIIDQIGKAVAEMDNAKQMAGTLHALGVRHKGFGDIRADFFPALGMCLLDAMEEKVPGLNRTLWAAAYREISDALVAGLES.

The region spanning Pro-2–Glu-146 is the Globin domain. His-96 is a binding site for heme b.

This sequence belongs to the globin family. As to quaternary structure, polymer.

In Glycera dibranchiata (Bloodworm), this protein is Globin, polymeric component P2.